Here is a 62-residue protein sequence, read N- to C-terminus: Probable tautomerase RSc0807 (62 aa).

Residue proline 2 is the Proton acceptor; via imino nitrogen of the active site.

The protein belongs to the 4-oxalocrotonate tautomerase family.

This Ralstonia nicotianae (strain ATCC BAA-1114 / GMI1000) (Ralstonia solanacearum) protein is Probable tautomerase RSc0807.